Here is a 341-residue protein sequence, read N- to C-terminus: UPF0283 membrane protein HD_1769 (341 aa).

A run of 3 helical transmembrane segments spans residues 57–77 (LLAVLVLFGLAVIARSVQCLI), 86–106 (IDLAFAIVFFMVSLAGIGAII), and 204–224 (ENAIIVAVSPLVIVDMLMIAW).

It belongs to the UPF0283 family.

It localises to the cell inner membrane. This is UPF0283 membrane protein HD_1769 from Haemophilus ducreyi (strain 35000HP / ATCC 700724).